We begin with the raw amino-acid sequence, 309 residues long: Porphobilinogen deaminase (309 aa).

C242 carries the S-(dipyrrolylmethanemethyl)cysteine modification.

Belongs to the HMBS family. As to quaternary structure, monomer. Requires dipyrromethane as cofactor.

The enzyme catalyses 4 porphobilinogen + H2O = hydroxymethylbilane + 4 NH4(+). It functions in the pathway porphyrin-containing compound metabolism; protoporphyrin-IX biosynthesis; coproporphyrinogen-III from 5-aminolevulinate: step 2/4. Tetrapolymerization of the monopyrrole PBG into the hydroxymethylbilane pre-uroporphyrinogen in several discrete steps. This is Porphobilinogen deaminase from Legionella pneumophila subsp. pneumophila (strain Philadelphia 1 / ATCC 33152 / DSM 7513).